The primary structure comprises 181 residues: Oligoribonuclease (181 aa).

The Exonuclease domain occupies 8–171 (LIWVDLEMTG…DDIHDSIAEL (164 aa)). The active site involves Y129.

The protein belongs to the oligoribonuclease family.

It localises to the cytoplasm. Its function is as follows. 3'-to-5' exoribonuclease specific for small oligoribonucleotides. In Photobacterium profundum (strain SS9), this protein is Oligoribonuclease.